A 129-amino-acid polypeptide reads, in one-letter code: KVFSKCELAHKLKAQEMDGFGGYSLANWVCMAEYESNFNTRAFNGKNANGSYDYGLFQLNSKWWCKDNKRSSSNACNIMCSKLLDDNIDDDISCAKRVVRDPKGMSAWKAWVKHCKDKDLSEYLASCNL.

Residues 1–129 (KVFSKCELAH…LSEYLASCNL (129 aa)) form the C-type lysozyme domain. Intrachain disulfides connect Cys6–Cys127, Cys30–Cys115, Cys65–Cys80, and Cys76–Cys94. Catalysis depends on residues Glu35 and Asp53. The Ca(2+) site is built by Lys82, Asp85, Asn87, Asp90, and Asp91.

Belongs to the glycosyl hydrolase 22 family. As to quaternary structure, monomer. Ca(2+) serves as cofactor.

The enzyme catalyses Hydrolysis of (1-&gt;4)-beta-linkages between N-acetylmuramic acid and N-acetyl-D-glucosamine residues in a peptidoglycan and between N-acetyl-D-glucosamine residues in chitodextrins.. Its function is as follows. Lysozymes have primarily a bacteriolytic function; those in tissues and body fluids are associated with the monocyte-macrophage system and enhance the activity of immunoagents. The protein is Lysozyme C (LYZ) of Equus asinus (Donkey).